The chain runs to 722 residues: Bifunctional UDP-N-acetylglucosamine 2-epimerase/N-acetylmannosamine kinase (722 aa).

UDP is bound by residues Arg-19, Ser-23, Arg-113, His-220, and Asn-253. CMP-N-acetyl-beta-neuraminate-binding residues include Lys-259, Glu-271, Lys-280, and His-281. Val-282, Ser-301, Ser-302, Glu-307, and Arg-321 together coordinate UDP. Residues 406 to 722 form an N-acetylmannosamine kinase region; sequence TLSALAVDLG…VLDYTTRRIH (317 aa). A Mg(2+)-binding site is contributed by Asp-413. An N-acyl-D-mannosamine 6-phosphate is bound at residue Gly-416. Positions 417, 418, and 420 each coordinate ADP. Gly-476, Arg-477, Thr-489, Asn-516, Asp-517, and Gly-545 together coordinate an N-acyl-D-mannosamine 6-phosphate. Residues Gly-476, Arg-477, Thr-489, Asn-516, and Asp-517 each coordinate an N-acyl-D-mannosamine. Asp-517 is an active-site residue. An N-acyl-D-mannosamine contacts are provided by Glu-566 and His-569. An N-acyl-D-mannosamine 6-phosphate is bound at residue His-569. His-569, Cys-579, Cys-581, and Cys-586 together coordinate Zn(2+). Glu-588 contacts an N-acyl-D-mannosamine 6-phosphate. An N-acyl-D-mannosamine is bound at residue Glu-588.

In the N-terminal section; belongs to the UDP-N-acetylglucosamine 2-epimerase family. It in the C-terminal section; belongs to the ROK (NagC/XylR) family. Homodimer. Homotetramer. Homohexamer. The hexameric form exhibits both enzyme activities, whereas the dimeric form only catalyzes the phosphorylation of N-acyl-D-mannosamine. Post-translationally, phosphorylated. Phosphorylation by PKC activates the UDP-N-acetylglucosamine 2-epimerase activity.

The protein resides in the cytoplasm. It localises to the cytosol. It carries out the reaction UDP-N-acetyl-alpha-D-glucosamine + H2O = aldehydo-N-acetyl-D-mannosamine + UDP + H(+). It catalyses the reaction an N-acyl-D-mannosamine + ATP = an N-acyl-D-mannosamine 6-phosphate + ADP + H(+). It functions in the pathway amino-sugar metabolism; N-acetylneuraminate biosynthesis. Its activity is regulated as follows. The UDP-N-acetylglucosamine 2-epimerase activity, in contrast to the N-acetylmannosamine kinase activity, exhibits allosteric regulation by cytidine monophosphate-N-acetylneuraminic acid (CMP-Neu5Ac), the end product of neuraminic acid biosynthesis. Moreover, the activity is contingent upon the oligomeric state of the enzyme. The monomeric form is inactive, while the dimeric form selectively catalyzes the phosphorylation of N-acetylmannosamine. The hexameric form, on the other hand, demonstrates full proficiency in both enzyme activities. Furthermore, the UDP-N-acetylglucosamine 2-epimerase activity is increased by PKC-mediated phosphorylation. Bifunctional enzyme that possesses both UDP-N-acetylglucosamine 2-epimerase and N-acetylmannosamine kinase activities, and serves as the initiator of the biosynthetic pathway leading to the production of N-acetylneuraminic acid (NeuAc), a critical precursor in the synthesis of sialic acids. By catalyzing this pivotal and rate-limiting step in sialic acid biosynthesis, this enzyme assumes a pivotal role in governing the regulation of cell surface sialylation, playing a role in embryonic angiogenesis. Sialic acids represent a category of negatively charged sugars that reside on the surface of cells as terminal components of glycoconjugates and mediate important functions in various cellular processes, including cell adhesion, signal transduction, and cellular recognition. This chain is Bifunctional UDP-N-acetylglucosamine 2-epimerase/N-acetylmannosamine kinase (GNE), found in Cricetulus griseus (Chinese hamster).